Consider the following 255-residue polypeptide: Taurine import ATP-binding protein TauB (255 aa).

An ABC transporter domain is found at 2-229; the sequence is LQISHLYADY…RFVAGESSRS (228 aa). 34-41 is a binding site for ATP; the sequence is GPSGCGKT.

Belongs to the ABC transporter superfamily. Taurine importer (TC 3.A.1.17.1) family. The complex is composed of two ATP-binding proteins (TauB), two transmembrane proteins (TauC) and a solute-binding protein (TauA).

The protein localises to the cell inner membrane. It catalyses the reaction taurine(out) + ATP + H2O = taurine(in) + ADP + phosphate + H(+). Its function is as follows. Part of the ABC transporter complex TauABC involved in taurine import. Responsible for energy coupling to the transport system. The polypeptide is Taurine import ATP-binding protein TauB (Shigella boydii serotype 4 (strain Sb227)).